A 72-amino-acid polypeptide reads, in one-letter code: uncharacterized protein (72 aa).

The tract at residues 15-62 is disordered; sequence NNNYNNNNNNNNNNNNNNNNNNNNNNNNNNININNNNNNNNNNNNNNN.

This is an uncharacterized protein from Dictyostelium discoideum (Social amoeba).